The chain runs to 487 residues: Glycogen synthase 2 (487 aa).

Lysine 12 contacts ADP-alpha-D-glucose.

This sequence belongs to the glycosyltransferase 1 family. Bacterial/plant glycogen synthase subfamily.

The catalysed reaction is [(1-&gt;4)-alpha-D-glucosyl](n) + ADP-alpha-D-glucose = [(1-&gt;4)-alpha-D-glucosyl](n+1) + ADP + H(+). Its pathway is glycan biosynthesis; glycogen biosynthesis. Functionally, synthesizes alpha-1,4-glucan chains using ADP-glucose. The chain is Glycogen synthase 2 from Methylococcus capsulatus (strain ATCC 33009 / NCIMB 11132 / Bath).